A 139-amino-acid polypeptide reads, in one-letter code: Large-conductance mechanosensitive channel (139 aa).

2 helical membrane-spanning segments follow: residues 16-36 and 83-103; these read VIDL…VDSL and GQFI…FVAV.

Belongs to the MscL family. Homopentamer.

It localises to the cell inner membrane. Its function is as follows. Channel that opens in response to stretch forces in the membrane lipid bilayer. May participate in the regulation of osmotic pressure changes within the cell. The protein is Large-conductance mechanosensitive channel of Aromatoleum aromaticum (strain DSM 19018 / LMG 30748 / EbN1) (Azoarcus sp. (strain EbN1)).